The sequence spans 216 residues: Probable GTP-binding protein EngB (216 aa).

The region spanning Gln37–Glu214 is the EngB-type G domain. GTP contacts are provided by residues Gly45–Ser52, Gly72–Glu76, Asp92–Gly95, Thr159–Asp162, and Thr193–Ser195. Ser52 and Thr74 together coordinate Mg(2+).

This sequence belongs to the TRAFAC class TrmE-Era-EngA-EngB-Septin-like GTPase superfamily. EngB GTPase family. Mg(2+) is required as a cofactor.

Functionally, necessary for normal cell division and for the maintenance of normal septation. The protein is Probable GTP-binding protein EngB of Rhodopseudomonas palustris (strain BisA53).